Here is a 243-residue protein sequence, read N- to C-terminus: 7-cyano-7-deazaguanine synthase (243 aa).

9 to 19 (FSGGQDSTTCL) contributes to the ATP binding site. Zn(2+) contacts are provided by cysteine 205, cysteine 220, cysteine 223, and cysteine 226.

This sequence belongs to the QueC family. Requires Zn(2+) as cofactor.

The catalysed reaction is 7-carboxy-7-deazaguanine + NH4(+) + ATP = 7-cyano-7-deazaguanine + ADP + phosphate + H2O + H(+). The protein operates within purine metabolism; 7-cyano-7-deazaguanine biosynthesis. Its function is as follows. Catalyzes the ATP-dependent conversion of 7-carboxy-7-deazaguanine (CDG) to 7-cyano-7-deazaguanine (preQ(0)). The sequence is that of 7-cyano-7-deazaguanine synthase from Albidiferax ferrireducens (strain ATCC BAA-621 / DSM 15236 / T118) (Rhodoferax ferrireducens).